The chain runs to 108 residues: Con-Ins K1 (108 aa).

Positions 1–24 are cleaved as a signal peptide; that stretch reads MTTSSYFLLVALGLLLYVCQSSFG. A propeptide spanning residues 25–28 is cleaved from the precursor; it reads SPHT. 3 disulfides stabilise this stretch: C41–C90, C53–C103, and C89–C94. E44 carries the 4-carboxyglutamate modification. The propeptide at 57-83 is c peptide; it reads RKRRGFPSMLKARAKRNEAFLLQRDGR. Position 87 is a 4-carboxyglutamate (E87). Residue Q107 is modified to Glutamine amide.

It belongs to the insulin family. As to quaternary structure, heterodimer of A and B chains; disulfide-linked. As to expression, expressed by the venom gland.

It localises to the secreted. Functionally, this venom insulin, from a fish-hunting cone snail, facilitates prey capture by rapidly inducing hypoglycemic shock. It is one of the smallest known insulin found in nature and lacks the C-terminal segment of the B chain that, in human insulin, mediates engagement of the insulin receptor (INSR) and assembly of the hormone's hexameric storage form. Despite lacking this segment, it both binds and activates human insulin receptor (long isoform (HIR-B)) with a moderate potency (EC(50)=30.45 nM). In vivo, intraperitoneal injection of this peptide into zebrafish lowers blood glucose with a lower potency than human insulin. In addition, when applied to water, this peptide reduces overall locomotor activity of zebrafish larvae, observed as a significant decrease in the percentage of time spent swimming and movement frequency. When tested on a mouse model of diabetes, this insulin also lowers blood glucose with a 20-fold lower potency than human insulin. This Conus kinoshitai (Kinoshita's cone) protein is Con-Ins K1.